A 1062-amino-acid chain; its full sequence is Carbamoyl phosphate synthase pyrimidine-specific large chain (1062 aa).

Residues 1–401 (MGKREDIKKI…SLLKAVRSLE (401 aa)) form a carboxyphosphate synthetic domain region. 12 residues coordinate ATP: Arg129, Arg169, Gly175, Gly176, Lys208, Ile210, Glu215, Gly241, Val242, His243, Gln284, and Glu298. Residues 133-327 (RALMKELNEP…IAKIAAKIAV (195 aa)) enclose the ATP-grasp 1 domain. Residues Gln284, Glu298, and Asn300 each contribute to the Mg(2+) site. 3 residues coordinate Mn(2+): Gln284, Glu298, and Asn300. An oligomerization domain region spans residues 402-546 (AGVYHLDQPD…YGTYEEENES (145 aa)). Residues 547-929 (ERTDKKSILV…ALYKGLIASG (383 aa)) are carbamoyl phosphate synthetic domain. Residues 671–861 (EQTLVELNIP…MANVATKVML (191 aa)) enclose the ATP-grasp 2 domain. Positions 707, 746, 748, 752, 777, 778, 779, 780, 820, and 832 each coordinate ATP. Residues Gln820, Glu832, and Asn834 each contribute to the Mg(2+) site. Residues Gln820, Glu832, and Asn834 each coordinate Mn(2+). One can recognise an MGS-like domain in the interval 930-1062 (MSIPTHGSVL…FSAESMPVMQ (133 aa)). An allosteric domain region spans residues 930–1062 (MSIPTHGSVL…FSAESMPVMQ (133 aa)).

The protein belongs to the CarB family. Composed of two chains; the small (or glutamine) chain promotes the hydrolysis of glutamine to ammonia, which is used by the large (or ammonia) chain to synthesize carbamoyl phosphate. Tetramer of heterodimers (alpha,beta)4. Mg(2+) serves as cofactor. It depends on Mn(2+) as a cofactor.

It catalyses the reaction hydrogencarbonate + L-glutamine + 2 ATP + H2O = carbamoyl phosphate + L-glutamate + 2 ADP + phosphate + 2 H(+). The enzyme catalyses hydrogencarbonate + NH4(+) + 2 ATP = carbamoyl phosphate + 2 ADP + phosphate + 2 H(+). Its pathway is amino-acid biosynthesis; L-arginine biosynthesis; carbamoyl phosphate from bicarbonate: step 1/1. The protein operates within pyrimidine metabolism; UMP biosynthesis via de novo pathway; (S)-dihydroorotate from bicarbonate: step 1/3. In terms of biological role, small subunit of the glutamine-dependent carbamoyl phosphate synthetase (CPSase). CPSase catalyzes the formation of carbamoyl phosphate from the ammonia moiety of glutamine, carbonate, and phosphate donated by ATP, constituting the first step of the biosynthetic pathway leading to pyrimidine nucleotides. The large subunit (synthetase) binds the substrates ammonia (free or transferred from glutamine from the small subunit), hydrogencarbonate and ATP and carries out an ATP-coupled ligase reaction, activating hydrogencarbonate by forming carboxy phosphate which reacts with ammonia to form carbamoyl phosphate. This Halalkalibacterium halodurans (strain ATCC BAA-125 / DSM 18197 / FERM 7344 / JCM 9153 / C-125) (Bacillus halodurans) protein is Carbamoyl phosphate synthase pyrimidine-specific large chain (pyrAB).